The primary structure comprises 491 residues: Bifunctional protein HldE (491 aa).

The interval 1-330 is ribokinase; it reads MDRKMVESLF…AAVSLEHRDS (330 aa). ATP is bound at residue 205–208; that stretch reads NRKE. Residue Asp-275 is part of the active site. A cytidylyltransferase region spans residues 356-491; it reads FTNGCFDLLH…KVLERYTDEQ (136 aa).

In the N-terminal section; belongs to the carbohydrate kinase PfkB family. The protein in the C-terminal section; belongs to the cytidylyltransferase family. Homodimer.

It carries out the reaction D-glycero-beta-D-manno-heptose 7-phosphate + ATP = D-glycero-beta-D-manno-heptose 1,7-bisphosphate + ADP + H(+). The enzyme catalyses D-glycero-beta-D-manno-heptose 1-phosphate + ATP + H(+) = ADP-D-glycero-beta-D-manno-heptose + diphosphate. It participates in nucleotide-sugar biosynthesis; ADP-L-glycero-beta-D-manno-heptose biosynthesis; ADP-L-glycero-beta-D-manno-heptose from D-glycero-beta-D-manno-heptose 7-phosphate: step 1/4. Its pathway is nucleotide-sugar biosynthesis; ADP-L-glycero-beta-D-manno-heptose biosynthesis; ADP-L-glycero-beta-D-manno-heptose from D-glycero-beta-D-manno-heptose 7-phosphate: step 3/4. Functionally, catalyzes the phosphorylation of D-glycero-D-manno-heptose 7-phosphate at the C-1 position to selectively form D-glycero-beta-D-manno-heptose-1,7-bisphosphate. In terms of biological role, catalyzes the ADP transfer from ATP to D-glycero-beta-D-manno-heptose 1-phosphate, yielding ADP-D-glycero-beta-D-manno-heptose. The protein is Bifunctional protein HldE of Trichlorobacter lovleyi (strain ATCC BAA-1151 / DSM 17278 / SZ) (Geobacter lovleyi).